Here is a 55-residue protein sequence, read N- to C-terminus: Large ribosomal subunit protein bL33B (55 aa).

This sequence belongs to the bacterial ribosomal protein bL33 family.

The chain is Large ribosomal subunit protein bL33B (rpmG2) from Mycobacterium tuberculosis (strain CDC 1551 / Oshkosh).